Here is a 201-residue protein sequence, read N- to C-terminus: Large ribosomal subunit protein bL25 (201 aa).

It belongs to the bacterial ribosomal protein bL25 family. CTC subfamily. As to quaternary structure, part of the 50S ribosomal subunit; part of the 5S rRNA/L5/L18/L25 subcomplex. Contacts the 5S rRNA. Binds to the 5S rRNA independently of L5 and L18.

Functionally, this is one of the proteins that binds to the 5S RNA in the ribosome where it forms part of the central protuberance. The sequence is that of Large ribosomal subunit protein bL25 from Burkholderia cenocepacia (strain HI2424).